Consider the following 181-residue polypeptide: Inner membrane-spanning protein YciB (181 aa).

A run of 5 helical transmembrane segments spans residues 22–42 (IYTA…VTYA), 50–70 (MQLI…FLHD), 80–100 (IVYC…KPVI), 122–142 (WVLF…EMPL), and 148–168 (FKVF…GMYV).

The protein belongs to the YciB family.

The protein resides in the cell inner membrane. Functionally, plays a role in cell envelope biogenesis, maintenance of cell envelope integrity and membrane homeostasis. This Aliivibrio fischeri (strain MJ11) (Vibrio fischeri) protein is Inner membrane-spanning protein YciB.